We begin with the raw amino-acid sequence, 420 residues long: Inheritance of peroxisomes protein 1 (420 aa).

Positions 1-10 are enriched in basic and acidic residues; that stretch reads MVLSRGETKK. Disordered regions lie at residues 1 to 75 and 273 to 309; these read MVLS…QRKR and SLSD…NYDD. Over residues 30 to 39 the composition is skewed to low complexity; the sequence is LKQSLKLSNN. Positions 45–56 are enriched in polar residues; the sequence is DSTQHSNDTNKS. Ser273 is subject to Phosphoserine. A compositionally biased stretch (acidic residues) spans 295–309; the sequence is NNDDDNDDDDDNYDD.

It belongs to the INP1 family. Interacts with PEX25, PEX30 and VPS1.

The protein resides in the peroxisome membrane. Its function is as follows. Required for peroxisome inheritance. The polypeptide is Inheritance of peroxisomes protein 1 (INP1) (Saccharomyces cerevisiae (strain ATCC 204508 / S288c) (Baker's yeast)).